A 263-amino-acid polypeptide reads, in one-letter code: Alpha-tubulin N-acetyltransferase 2 (263 aa).

Residues 1-181 form the N-acetyltransferase domain; that stretch reads MEIAFDLSTI…NKYALCSNFF (181 aa). 115–128 contributes to the acetyl-CoA binding site; it reads FFVVPTEQRSGNGF. Disordered stretches follow at residues 191–223 and 242–263; these read TPRQTKRASRASSAVSSHASSRNTSPIGRNRPR and EVDPNSPTGLKNARDFGHRRIW. Residues 200–212 show a composition bias toward low complexity; the sequence is RASSAVSSHASSR. Over residues 253 to 263 the composition is skewed to basic and acidic residues; it reads NARDFGHRRIW.

This sequence belongs to the acetyltransferase ATAT1 family. Expressed in touch receptor neurons and in a subset of ciliated neurons, including PDE, ADE, CEP, and OLQ neurons.

It catalyses the reaction L-lysyl-[alpha-tubulin] + acetyl-CoA = N(6)-acetyl-L-lysyl-[alpha-tubulin] + CoA + H(+). Specifically acetylates 'Lys-40' in alpha-tubulin/mec-12 on the lumenal side of microtubules. Promotes microtubule destabilization and accelerates microtubule dynamics; this activity may be independent of acetylation activity. Acetylates alpha-tubulin with a slow enzymatic rate, due to a catalytic site that is not optimized for acetyl transfer. Enters the microtubule through each end and diffuses quickly throughout the lumen of microtubules. Acetylates only long/old microtubules because of its slow acetylation rate since it does not have time to act on dynamically unstable microtubules before the enzyme is released. Required for the maintenance of touch receptor neurons and possibly other type of neurons involved in locomotion. The polypeptide is Alpha-tubulin N-acetyltransferase 2 (atat-2) (Caenorhabditis elegans).